The following is a 603-amino-acid chain: DNA mismatch repair protein MutL (603 aa).

Belongs to the DNA mismatch repair MutL/HexB family.

Functionally, this protein is involved in the repair of mismatches in DNA. It is required for dam-dependent methyl-directed DNA mismatch repair. May act as a 'molecular matchmaker', a protein that promotes the formation of a stable complex between two or more DNA-binding proteins in an ATP-dependent manner without itself being part of a final effector complex. This is DNA mismatch repair protein MutL from Nitrobacter winogradskyi (strain ATCC 25391 / DSM 10237 / CIP 104748 / NCIMB 11846 / Nb-255).